A 106-amino-acid chain; its full sequence is Large ribosomal subunit protein eL42 (106 aa).

The disordered stretch occupies residues 36–56 (FAQGKRRYDRKQSGYGGQTKP).

Belongs to the eukaryotic ribosomal protein eL42 family.

This Phaffia rhodozyma (Yeast) protein is Large ribosomal subunit protein eL42 (RPL44).